A 169-amino-acid polypeptide reads, in one-letter code: Allophycocyanin subunit beta-18 (169 aa).

An N4-methylasparagine modification is found at N72. C82 serves as a coordination point for (2R,3E)-phycocyanobilin.

Belongs to the phycobiliprotein family. In terms of assembly, heterodimer of ApcE and this beta chain. In terms of processing, contains one covalently linked bilin chromophore. The chromophore is added by phycocyanobilin lyase CpcUS.

It is found in the cellular thylakoid membrane. Its function is as follows. A variant beta-allophycocyanin (AP) which forms a complex with ApcE, a phycobilisome terminal emitter that influences energy transfer to photosystem II. This is Allophycocyanin subunit beta-18 (apcF) from Picosynechococcus sp. (strain ATCC 27264 / PCC 7002 / PR-6) (Agmenellum quadruplicatum).